The sequence spans 311 residues: Aspartate carbamoyltransferase catalytic subunit (311 aa).

2 residues coordinate carbamoyl phosphate: R59 and T60. K87 provides a ligand contact to L-aspartate. Positions 109, 139, and 142 each coordinate carbamoyl phosphate. R172 and R224 together coordinate L-aspartate. Carbamoyl phosphate-binding residues include A265 and P266.

It belongs to the aspartate/ornithine carbamoyltransferase superfamily. ATCase family. Heterododecamer (2C3:3R2) of six catalytic PyrB chains organized as two trimers (C3), and six regulatory PyrI chains organized as three dimers (R2).

The enzyme catalyses carbamoyl phosphate + L-aspartate = N-carbamoyl-L-aspartate + phosphate + H(+). It functions in the pathway pyrimidine metabolism; UMP biosynthesis via de novo pathway; (S)-dihydroorotate from bicarbonate: step 2/3. Functionally, catalyzes the condensation of carbamoyl phosphate and aspartate to form carbamoyl aspartate and inorganic phosphate, the committed step in the de novo pyrimidine nucleotide biosynthesis pathway. This Streptococcus equi subsp. equi (strain 4047) protein is Aspartate carbamoyltransferase catalytic subunit.